The sequence spans 579 residues: Adenine deaminase (579 aa).

Belongs to the metallo-dependent hydrolases superfamily. Adenine deaminase family. Mn(2+) is required as a cofactor.

It carries out the reaction adenine + H2O + H(+) = hypoxanthine + NH4(+). The polypeptide is Adenine deaminase (Listeria monocytogenes serotype 4b (strain F2365)).